Consider the following 682-residue polypeptide: E3 ubiquitin-protein ligase RNF103 (682 aa).

4 consecutive transmembrane segments (helical) span residues 6–26 (FFLL…EAIV), 326–346 (LFVL…FITQ), 366–386 (LLII…LDSF), and 411–431 (MFYS…GLLI). Positions 525 to 542 (EEMSESSQDTENDSDSDN) are enriched in acidic residues. A disordered region spans residues 525 to 549 (EEMSESSQDTENDSDSDNTDTFSSS). Residues 618–660 (CVVCLENFENGCLLMGLPCGHVFHQNCIVMWLAGGRHCCPVCR) form an RING-type zinc finger.

Interacts with DERL1 and VCP. Expressed in different tissues including hippocampus, cerebral cortex, heart, kidney, spleen and lung. Expression is increased in hippocampus and frontal cortex after chronic treatment with antidepressants.

It localises to the endoplasmic reticulum membrane. The catalysed reaction is S-ubiquitinyl-[E2 ubiquitin-conjugating enzyme]-L-cysteine + [acceptor protein]-L-lysine = [E2 ubiquitin-conjugating enzyme]-L-cysteine + N(6)-ubiquitinyl-[acceptor protein]-L-lysine.. It functions in the pathway protein modification; protein ubiquitination. Acts as an E2-dependent E3 ubiquitin-protein ligase, probably involved in the ER-associated protein degradation pathway. The chain is E3 ubiquitin-protein ligase RNF103 (Rnf103) from Rattus norvegicus (Rat).